Here is a 193-residue protein sequence, read N- to C-terminus: MATKLIVGLGNPGPKYLWTRHNAGFMVLDRLAHAIGASVTRKSFSGVFGEGAWHGERLLLLKPQTYMNLSGRSVAEALRFHKLPLCDTIVIHDDLDIPFGRVKVKEGGGHGGHNGLRSLVQELGGAGFVRVRVGIGRPVHGDVVNYVLTNFSQDEMADLAHLLDGTLDLLESLLTAGLPKTMSLYNNKDLLAP.

Tyr16 serves as a coordination point for tRNA. His21 functions as the Proton acceptor in the catalytic mechanism. Residues Tyr66, Asn68, and Asn114 each coordinate tRNA.

Belongs to the PTH family. In terms of assembly, monomer.

It localises to the cytoplasm. It catalyses the reaction an N-acyl-L-alpha-aminoacyl-tRNA + H2O = an N-acyl-L-amino acid + a tRNA + H(+). Hydrolyzes ribosome-free peptidyl-tRNAs (with 1 or more amino acids incorporated), which drop off the ribosome during protein synthesis, or as a result of ribosome stalling. Functionally, catalyzes the release of premature peptidyl moieties from peptidyl-tRNA molecules trapped in stalled 50S ribosomal subunits, and thus maintains levels of free tRNAs and 50S ribosomes. The polypeptide is Peptidyl-tRNA hydrolase (Geobacter sulfurreducens (strain ATCC 51573 / DSM 12127 / PCA)).